The sequence spans 54 residues: Large ribosomal subunit protein bL32c (54 aa).

Belongs to the bacterial ribosomal protein bL32 family.

It localises to the plastid. It is found in the chloroplast. The polypeptide is Large ribosomal subunit protein bL32c (Lactuca sativa (Garden lettuce)).